A 464-amino-acid polypeptide reads, in one-letter code: C-terminal processing peptidase, chloroplastic (464 aa).

The N-terminal 32 residues, 1–32 (MHSRTNCLQTSVRAPQPHFRPFTAVKTCRQRC), are a transit peptide targeting the chloroplast. A thylakoid-targeting transit peptide spans 33 to 77 (STTAAAAKRDQAQEQQPWIQVGLGLAAAATAVAVGLGAAALPAQA). The 86-residue stretch at 149 to 234 (LAALRRGTAG…SQVEVVLHAP (86 aa)) folds into the PDZ domain. Residues S372 and K397 each act as charge relay system in the active site.

It belongs to the peptidase S41A family. In terms of assembly, monomer.

It localises to the plastid. It is found in the chloroplast thylakoid lumen. It catalyses the reaction The enzyme shows specific recognition of a C-terminal tripeptide, Xaa-Yaa-Zaa, in which Xaa is preferably Ala or Leu, Yaa is preferably Ala or Tyr, and Zaa is preferably Ala, but then cleaves at a variable distance from the C-terminus. A typical cleavage is -Ala-Ala-|-Arg-Ala-Ala-Lys-Glu-Asn-Tyr-Ala-Leu-Ala-Ala.. Not inhibited by antipain, 4-amidinophenylmethanesulfonyl fluoride, aprotinin, chymostatin, 3,4-dichloroisocoumarin, diisopropyl fluorophosphate, E64, EDTA, EGTA, iodoacetamide, leupeptin, pepstatin, o-phenanthroline, N-ethylmaleimide, phosphoramidon or phenylmethylsulfonyl fluoride. Functionally, protease involved in the C-terminal processing of the chloroplastic D1 protein of photosystem II. This proteolytic processing is necessary to allow the light-driven assembly of the tetranuclear manganese cluster, which is responsible for photosynthetic water oxidation. This Tetradesmus obliquus (Green alga) protein is C-terminal processing peptidase, chloroplastic (ctpA).